We begin with the raw amino-acid sequence, 211 residues long: Thymidylate kinase (211 aa).

Residue 11-18 coordinates ATP; it reads GPDGAGKT.

Belongs to the thymidylate kinase family.

The catalysed reaction is dTMP + ATP = dTDP + ADP. Phosphorylation of dTMP to form dTDP in both de novo and salvage pathways of dTTP synthesis. The polypeptide is Thymidylate kinase (Streptococcus pyogenes serotype M1).